Consider the following 1000-residue polypeptide: Chromosome transmission fidelity protein 18 homolog (1000 aa).

Disordered regions lie at residues 53-89, 130-159, and 272-301; these read SAGD…RDAS, AGNS…DSKF, and EFGE…SHSL. Residues 60–70 show a composition bias toward polar residues; that stretch reads SNANSKPTGDS. A compositionally biased stretch (acidic residues) spans 272-295; sequence EFGENDSEILENDDNAGEEDDEDE. 396-403 is an ATP binding site; that stretch reads GPPGLGKT. Residues 888–898 show a composition bias toward polar residues; sequence ARNAGRDNTTA. The tract at residues 888 to 916 is disordered; sequence ARNAGRDNTTAAAAVKTADPKGAKSAAKP.

It belongs to the activator 1 small subunits family. CTF18 subfamily. As to quaternary structure, component of the CTF18-RFC complex, which consists of ctf18, ctf8, dcc1, rfc2, rfc3, rfc4 and rfc5. The CTF18-RFC complex associates with pcna.

The protein localises to the nucleus. Its function is as follows. Chromosome cohesion factor involved in sister chromatid cohesion and fidelity of chromosome transmission. Component of one of the cell nuclear antigen loader complexes, CTF18-replication factor C (CTF18-RFC), which consists of ctf18, ctf8, dcc1, rfc2, rfc3, rfc4 and rfc5. The CTF18-RFC complex binds to single-stranded and primed DNAs and has weak ATPase activity that is stimulated by the presence of primed DNA, replication protein A (RPA) and by proliferating cell nuclear antigen (pcna). The CTF18-RFC complex catalyzes the ATP-dependent loading of pcna onto primed and gapped DNA. In Xenopus laevis (African clawed frog), this protein is Chromosome transmission fidelity protein 18 homolog (chtf18).